The following is a 110-amino-acid chain: NADH-quinone oxidoreductase subunit K (110 aa).

3 helical membrane-spanning segments follow: residues 14–34 (VSQYFILSFILLGIGLFGMMV), 39–59 (ITILMSLELALNSVNIAFVGI), and 70–90 (IFALFTIALAAAEAAVGLGII).

The protein belongs to the complex I subunit 4L family. NDH-1 is composed of 14 different subunits. Subunits NuoA, H, J, K, L, M, N constitute the membrane sector of the complex.

The protein localises to the cell inner membrane. It carries out the reaction a quinone + NADH + 5 H(+)(in) = a quinol + NAD(+) + 4 H(+)(out). Functionally, NDH-1 shuttles electrons from NADH, via FMN and iron-sulfur (Fe-S) centers, to quinones in the respiratory chain. The immediate electron acceptor for the enzyme in this species is believed to be ubiquinone. Couples the redox reaction to proton translocation (for every two electrons transferred, four hydrogen ions are translocated across the cytoplasmic membrane), and thus conserves the redox energy in a proton gradient. This chain is NADH-quinone oxidoreductase subunit K, found in Hydrogenobaculum sp. (strain Y04AAS1).